Consider the following 30-residue polypeptide: Poly-His-poly-Gly peptide 2 (30 aa).

The span at 1–18 (EDDHDHHHHHHHHHHHHG) shows a compositional bias: basic residues. The tract at residues 1 to 30 (EDDHDHHHHHHHHHHHHGVGGGGGGGGGGA) is disordered. Residues 19–30 (VGGGGGGGGGGA) show a composition bias toward gly residues.

Expressed by the venom gland.

The protein localises to the secreted. Functionally, may serve as a metalloproteinase inhibitor during glandular storage. Their inhibition may be instantly disengaged, by dilution or physiochemical change, when venom is injected into tissue of the victim. This chain is Poly-His-poly-Gly peptide 2, found in Atheris nitschei (Great lakes bush viper).